A 763-amino-acid chain; its full sequence is MTQKTTLVLLALAVITIFALVCVLLAGRSGDGGRLSQPLHCPSVLPSVQPQTHPGQSQPFADLSPEELTAVMSFLIKHLGPGLVDAAQARPSDNCVFSVELQLPAKAAALAHLDRGGPPPVREALAIIFFGGQPKPNVSELVVGPLPHPSYMRDVTVERHGGPLPYYRRPVLTREYQDIQEMIFHRELPQASGLLHHCCFYKRQGHNLLKMTTAPRGLQSGDRATWFGIYYNLSGAGFYPHPIGLELLVDHKALDPALWTIQKVFYQGRYYESLTQLEDMFEAGLVNVVLVPDNGTGGSWSLKSSVPPGRAPPLQFHPEGPRFSVQGSQVRSSLWAFSFGLGAFSGPRIFDIRFQGERVAYEISVQEAIALYGGNSPASMSTCYMDGSFGIGKYSTPLTRGVDCPYLATYVDWHFLLESQTPKTLRDAFCVFEQNQGLPLRRHHSDFYSHYFGGVVETVLVVRSVATLLNYDYVWDMVFHSNGAIEVKFHATGYITSAFFFGAGEKFGNRVAEHTLGTVHTHNAHFKVDLDVAGLKNWAWAEDLAFVPMNVPWQPEFQMQRLQVTRKLLETEEEAAFPLGNATPRYLYLASNHSNKWGHRRGYRIQILSFAGKPLPQESPIEKAFTWGRYHLAVTQRKEEEPSSSSIYNQNDPWTPTVDFTDFISNETIAGEDLVAWVTAGFLHIPHAEDIPNTVTVGNGVGFFLRPYNFFDEDPSFYSPDSIYFRKDQDVTDCEVNSLACLSQTANCVPDLPAFSHGGFTYK.

Residues 2 to 6 (TQKTT) lie on the Cytoplasmic side of the membrane. A helical; Signal-anchor for type II membrane protein transmembrane segment spans residues 7–27 (LVLLALAVITIFALVCVLLAG). The Extracellular segment spans residues 28–763 (RSGDGGRLSQ…AFSHGGFTYK (736 aa)). A glycan (N-linked (GlcNAc...) asparagine) is linked at asparagine 137. A disulfide bond links cysteine 198 and cysteine 199. N-linked (GlcNAc...) asparagine glycans are attached at residues asparagine 232 and asparagine 294. Residue aspartate 386 is the Proton acceptor of the active site. Cysteines 404 and 430 form a disulfide. Residue tyrosine 471 is the Schiff-base intermediate with substrate; via topaquinone of the active site. Tyrosine 471 bears the 2',4',5'-topaquinone mark. The Cu(2+) site is built by histidine 520 and histidine 522. Aspartate 529, leucine 530, aspartate 531, and glutamate 572 together coordinate Ca(2+). N-linked (GlcNAc...) asparagine glycans are attached at residues asparagine 581 and asparagine 592. Residues glutamate 641 and phenylalanine 663 each contribute to the Ca(2+) site. A glycan (N-linked (GlcNAc...) asparagine) is linked at asparagine 666. 3 residues coordinate Ca(2+): glutamate 667, aspartate 673, and leucine 674. Histidine 684 is a Cu(2+) binding site. An intrachain disulfide couples cysteine 734 to cysteine 741.

It belongs to the copper/topaquinone oxidase family. In terms of assembly, homodimer; disulfide-linked. Probably forms heterodimers with AOC2. Cu(2+) is required as a cofactor. It depends on Ca(2+) as a cofactor. The cofactor is L-topaquinone. Post-translationally, topaquinone (TPQ) is generated by copper-dependent autoxidation of a specific tyrosyl residue. In terms of processing, N- and O-glycosylated. In terms of tissue distribution, highly expressed in adipocytes, aorta and lung. Expressed at lower levels in heart, kidney, large intestine, liver, small intestine and stomach.

The protein resides in the cell membrane. It catalyses the reaction methylamine + O2 + H2O = formaldehyde + H2O2 + NH4(+). The catalysed reaction is benzylamine + O2 + H2O = benzaldehyde + H2O2 + NH4(+). The enzyme catalyses 2-phenylethylamine + O2 + H2O = 2-phenylacetaldehyde + H2O2 + NH4(+). Its function is as follows. Catalyzes the oxidative deamination of primary amines to the corresponding aldehydes with the concomitant production of hydrogen peroxide and ammonia. Has a preference for the primary monoamines methylamine and benzylamine. Could also act on 2-phenylethylamine but much less efficiently. At endothelial cells surface can also function as a cell adhesion protein that participates in lymphocyte extravasation and recirculation by mediating the binding of lymphocytes to peripheral lymph node vascular endothelial cells in an L-selectin-independent fashion. The polypeptide is Amine oxidase [copper-containing] 3 (Rattus norvegicus (Rat)).